Here is a 291-residue protein sequence, read N- to C-terminus: uncharacterized protein (291 aa).

3 Solcar repeats span residues 15–93 (PGPV…IKKS), 104–190 (PRTV…IKQS), and 201–287 (LSTV…VMEI). 6 helical membrane-spanning segments follow: residues 21–41 (IIAG…AEFA), 70–90 (STVI…FDSI), 108–128 (LAGL…FESI), 169–189 (TVAR…SIKQ), 201–221 (LSTV…VYCT), and 259–280 (FWSG…VFTV).

The protein belongs to the mitochondrial carrier (TC 2.A.29) family.

The protein resides in the mitochondrion inner membrane. This is an uncharacterized protein from Schizosaccharomyces pombe (strain 972 / ATCC 24843) (Fission yeast).